The chain runs to 834 residues: Ras GTPase-activating protein 3 (834 aa).

2 C2 domains span residues 1-112 (MAVE…DTWF) and 123-263 (VQGK…EAWY). Ala2 is modified (N-acetylalanine). The residue at position 66 (Tyr66) is a Phosphotyrosine. Residue Ser77 is modified to Phosphoserine. Thr110 carries the phosphothreonine modification. The 216-residue stretch at 346–561 (GRVVPFISAI…DAVKNFLDLI (216 aa)) folds into the Ras-GAP domain. The PH domain maps to 576–677 (ILLKEGFMIK…WIDILTKVSQ (102 aa)). The segment at 679–715 (NQKRLTVFHPSAYLNGHWLCCRASSDTAAGCTPCTGG) adopts a Btk-type zinc-finger fold. The Zn(2+) site is built by His687, Cys698, Cys699, and Cys709. Phosphoserine occurs at positions 809 and 833.

High levels in brain, lower in spleen and lung.

Inhibitory regulator of the Ras-cyclic AMP pathway. May bind inositol tetrakisphosphate (IP4). The sequence is that of Ras GTPase-activating protein 3 (Rasa3) from Mus musculus (Mouse).